A 210-amino-acid polypeptide reads, in one-letter code: MATETVELHKLKLAELKQECLARGLETKGIKQDLIHRLQAYLEEHAEEEANEEDVLGDETEEEETKPIELPVKEEEPPEKTVDVAAEKKVVKITSEIPQTERMQKRAERFNVPVSLESKKAARAARFGISSVPTKGLSSDNKPMVNLDKLKERAQRFGLNVSSISRKSEDDEKLKKRKERFGIVTSSAGTGTTEDTEAKKRKRAERFGIA.

Alanine 2 bears the N-acetylalanine mark. One can recognise an SAP domain in the interval 8–42 (LHKLKLAELKQECLARGLETKGIKQDLIHRLQAYL). At lysine 10 the chain carries N6-acetyllysine. Acidic residues predominate over residues 45-64 (HAEEEANEEDVLGDETEEEE). The interval 45 to 86 (HAEEEANEEDVLGDETEEEETKPIELPVKEEEPPEKTVDVAA) is disordered. Positions 65 to 86 (TKPIELPVKEEEPPEKTVDVAA) are enriched in basic and acidic residues. Lysine 142 bears the N6-acetyllysine mark. A disordered region spans residues 161-210 (VSSISRKSEDDEKLKKRKERFGIVTSSAGTGTTEDTEAKKRKRAERFGIA). Serine 163 carries the post-translational modification Phosphoserine. Over residues 184–193 (VTSSAGTGTT) the composition is skewed to polar residues.

The protein belongs to the SAP domain-containing ribonucleoprotein family. Interacts with DDX39A. Interacts with FUS. Interacts (via the C-terminal domain) with DDX39B; the interaction is direct and facilitates RNA binding of DDX39B. Component of the transcription/export (TREX) complex at least composed of ALYREF/THOC4, DDX39B, SARNP/CIP29, CHTOP and the THO subcomplex; TREX seems to have dynamic structure involving ATP-dependent remodeling; in the complex interacts directly with DDX39B in a ATP-dependent manner which bridges it to ALYREF/THOC4. As to expression, low expression in spleen, liver, pancreas, testis, thymus, heart, and kidney. Increased levels are seen in hepatocellular carcinoma and pancreatic adenocarcinoma.

Its subcellular location is the nucleus. It is found in the nucleus speckle. Functionally, binds both single-stranded and double-stranded DNA with higher affinity for the single-stranded form. Specifically binds to scaffold/matrix attachment region DNA. Also binds single-stranded RNA. Enhances RNA unwinding activity of DDX39A. May participate in important transcriptional or translational control of cell growth, metabolism and carcinogenesis. Component of the TREX complex which is thought to couple mRNA transcription, processing and nuclear export, and specifically associates with spliced mRNA and not with unspliced pre-mRNA. The TREX complex is recruited to spliced mRNAs by a transcription-independent mechanism, binds to mRNA upstream of the exon-junction complex (EJC) and is recruited in a splicing- and cap-dependent manner to a region near the 5' end of the mRNA where it functions in mRNA export to the cytoplasm via the TAP/NXF1 pathway. Associates with DDX39B, which facilitates RNA binding of DDX39B and likely plays a role in mRNA export. The chain is SAP domain-containing ribonucleoprotein (SARNP) from Homo sapiens (Human).